Reading from the N-terminus, the 331-residue chain is Osmotic avoidance abnormal protein 8 (331 aa).

Positions Met1–Cys21 are cleaved as a signal peptide.

Expressed in the hypodermal syncitium but not in hypodermal seam cells.

The protein resides in the secreted. Negative regulator of the osmotic stress response. Acts via the transmembrane protein ptr-23. This Caenorhabditis elegans protein is Osmotic avoidance abnormal protein 8 (osm-8).